Reading from the N-terminus, the 176-residue chain is N-alpha-acetyltransferase 30 (176 aa).

In terms of domain architecture, N-acetyltransferase spans 3-159 (IVYKPLDIRN…DAFKLILPLT (157 aa)).

The protein belongs to the acetyltransferase family. MAK3 subfamily. As to quaternary structure, component of the N-terminal acetyltransferase C (NatC) complex, which is composed of MAK3, MAK10 and MAK31.

It localises to the cytoplasm. The protein resides in the nucleus. The enzyme catalyses N-terminal L-methionyl-L-leucyl-[protein] + acetyl-CoA = N-terminal N(alpha)-acetyl-L-methionyl-L-leucyl-[protein] + CoA + H(+). The catalysed reaction is N-terminal L-methionyl-L-isoleucyl-[protein] + acetyl-CoA = N-terminal N(alpha)-acetyl-L-methionyl-L-isoleucyl-[protein] + CoA + H(+). It catalyses the reaction N-terminal L-methionyl-L-phenylalanyl-[protein] + acetyl-CoA = N-terminal N(alpha)-acetyl-L-methionyl-L-phenylalanyl-[protein] + CoA + H(+). It carries out the reaction N-terminal L-methionyl-L-tryptophyl-[protein] + acetyl-CoA = N-terminal N(alpha)-acetyl-L-methionyl-L-tryptophyl-[protein] + CoA + H(+). The enzyme catalyses N-terminal L-methionyl-L-tyrosyl-[protein] + acetyl-CoA = N-terminal N(alpha)-acetyl-L-methionyl-L-tyrosyl-[protein] + CoA + H(+). Its function is as follows. Catalytic component of the NatC N-terminal acetyltransferase, which catalyzes acetylation of the N-terminus Met of L-A virus GAG protein and possibly GRH1. The sequence is that of N-alpha-acetyltransferase 30 (MAK3) from Saccharomyces cerevisiae (strain ATCC 204508 / S288c) (Baker's yeast).